The following is a 206-amino-acid chain: GTP-binding protein YPTC5 (206 aa).

15 to 22 contacts GTP; that stretch reads GDSGVGKT. An Effector region motif is present at residues 37–45; sequence YKATIGADF. Residues 63–67 and 125–128 each bind GTP; these read DTAGQ and NKID. 2 S-geranylgeranyl cysteine lipidation sites follow: cysteine 205 and cysteine 206.

The protein belongs to the small GTPase superfamily. Rab family.

The protein resides in the cell membrane. Its function is as follows. Protein transport. Probably involved in vesicular traffic. This Chlamydomonas reinhardtii (Chlamydomonas smithii) protein is GTP-binding protein YPTC5 (YPTC5).